We begin with the raw amino-acid sequence, 178 residues long: MSAKEGSSHPSYAEIVREHAPEQTAAEKAAPQPPEVEEVLSEEPYQKNEKVVVLDEEDADAFLHPEEAEAKKESEKPSDGEKKGKTEKLEKEAKSVYSKACNFVNAHKVPASAAISINLLSLGAISAYLLKSRQSGTLNNRTLCTCTAIAGIVFTISAVFSKTPKTACCASKKSNKST.

Residues 1-89 are disordered; that stretch reads MSAKEGSSHP…GEKKGKTEKL (89 aa). 2 stretches are compositionally biased toward basic and acidic residues: residues 44-53 and 61-89; these read PYQKNEKVVV and AFLH…TEKL.

This is an uncharacterized protein from Schizosaccharomyces pombe (strain 972 / ATCC 24843) (Fission yeast).